The chain runs to 318 residues: Probable carboxylesterase 1 (318 aa).

The residue at position 1 (Met1) is an N-acetylmethionine. The short motif at 79 to 81 (HGG) is the Involved in the stabilization of the negatively charged intermediate by the formation of the oxyanion hole element. Residues Ser163, Asp258, and His290 contribute to the active site.

The protein belongs to the 'GDXG' lipolytic enzyme family. In terms of tissue distribution, expressed in roots, stems, flowers and siliques.

The catalysed reaction is a carboxylic ester + H2O = an alcohol + a carboxylate + H(+). Functionally, carboxylesterase acting on esters with varying acyl chain length. The chain is Probable carboxylesterase 1 (CXE1) from Arabidopsis thaliana (Mouse-ear cress).